Consider the following 267-residue polypeptide: NAD kinase 2 (267 aa).

The active-site Proton acceptor is Asp50. NAD(+) is bound by residues 50 to 51, Lys55, 122 to 123, Arg149, Asp151, 162 to 167, and Ala186; these read DG, NE, and TAYNKS.

Belongs to the NAD kinase family. The cofactor is a divalent metal cation.

Its subcellular location is the cytoplasm. It catalyses the reaction NAD(+) + ATP = ADP + NADP(+) + H(+). Its function is as follows. Involved in the regulation of the intracellular balance of NAD and NADP, and is a key enzyme in the biosynthesis of NADP. Catalyzes specifically the phosphorylation on 2'-hydroxyl of the adenosine moiety of NAD to yield NADP. In Listeria monocytogenes serovar 1/2a (strain ATCC BAA-679 / EGD-e), this protein is NAD kinase 2.